The primary structure comprises 655 residues: Putative sensor protein Sfri_3689 (655 aa).

The signal sequence occupies residues 1–17; that stretch reads MKTLLLLLIIITMPVLA. A helical membrane pass occupies residues 252–272; sequence FALAILVAIMSAIGMIFTGFI. Positions 419–653 constitute a Histidine kinase domain; it reads GIAHEINNPT…QIRLIFALAQ (235 aa). At H422 the chain carries Phosphohistidine; by autocatalysis.

Its subcellular location is the cell membrane. The enzyme catalyses ATP + protein L-histidine = ADP + protein N-phospho-L-histidine.. The chain is Putative sensor protein Sfri_3689 from Shewanella frigidimarina (strain NCIMB 400).